The sequence spans 319 residues: 1-aminocyclopropane-1-carboxylate oxidase (319 aa).

In terms of domain architecture, Fe2OG dioxygenase spans 153–253 (PTFGTKVSNY…RMSIASFYNP (101 aa)). Positions 177, 179, and 234 each coordinate Fe cation.

It belongs to the iron/ascorbate-dependent oxidoreductase family. It depends on Fe cation as a cofactor.

It catalyses the reaction 1-aminocyclopropane-1-carboxylate + L-ascorbate + O2 = ethene + L-dehydroascorbate + hydrogen cyanide + CO2 + 2 H2O. Its pathway is alkene biosynthesis; ethylene biosynthesis via S-adenosyl-L-methionine; ethylene from S-adenosyl-L-methionine: step 2/2. In Actinidia deliciosa (Kiwi), this protein is 1-aminocyclopropane-1-carboxylate oxidase (ACO).